A 166-amino-acid chain; its full sequence is Flagellar assembly factor FliW (166 aa).

The protein belongs to the FliW family. In terms of assembly, interacts with translational regulator CsrA and flagellin(s).

It is found in the cytoplasm. Functionally, acts as an anti-CsrA protein, binds CsrA and prevents it from repressing translation of its target genes, one of which is flagellin. Binds to flagellin and participates in the assembly of the flagellum. The protein is Flagellar assembly factor FliW of Desulfovibrio desulfuricans (strain ATCC 27774 / DSM 6949 / MB).